Reading from the N-terminus, the 149-residue chain is Large ribosomal subunit protein bL9 (149 aa).

It belongs to the bacterial ribosomal protein bL9 family.

In terms of biological role, binds to the 23S rRNA. This chain is Large ribosomal subunit protein bL9, found in Anaeromyxobacter dehalogenans (strain 2CP-C).